A 362-amino-acid polypeptide reads, in one-letter code: Phosphoserine aminotransferase (362 aa).

Residues Ser9 and Arg42 each contribute to the L-glutamate site. Pyridoxal 5'-phosphate is bound by residues Gly76–Arg77, Trp102, Thr153, Asp174, and Gln197. An N6-(pyridoxal phosphate)lysine modification is found at Lys198. Residue Asn239 to Thr240 coordinates pyridoxal 5'-phosphate.

It belongs to the class-V pyridoxal-phosphate-dependent aminotransferase family. SerC subfamily. As to quaternary structure, homodimer. It depends on pyridoxal 5'-phosphate as a cofactor.

It is found in the cytoplasm. The catalysed reaction is O-phospho-L-serine + 2-oxoglutarate = 3-phosphooxypyruvate + L-glutamate. It carries out the reaction 4-(phosphooxy)-L-threonine + 2-oxoglutarate = (R)-3-hydroxy-2-oxo-4-phosphooxybutanoate + L-glutamate. It functions in the pathway amino-acid biosynthesis; L-serine biosynthesis; L-serine from 3-phospho-D-glycerate: step 2/3. Its pathway is cofactor biosynthesis; pyridoxine 5'-phosphate biosynthesis; pyridoxine 5'-phosphate from D-erythrose 4-phosphate: step 3/5. Catalyzes the reversible conversion of 3-phosphohydroxypyruvate to phosphoserine and of 3-hydroxy-2-oxo-4-phosphonooxybutanoate to phosphohydroxythreonine. This chain is Phosphoserine aminotransferase, found in Klebsiella pneumoniae subsp. pneumoniae (strain ATCC 700721 / MGH 78578).